The sequence spans 448 residues: Tubulin beta chain (448 aa).

Residues Gln11, Glu69, Ser138, Gly142, Thr143, Gly144, Asn204, and Asn226 each coordinate GTP. Glu69 lines the Mg(2+) pocket. Residues 429 to 448 (GIDEGDEDYEIEEEKEPLEY) form a disordered region.

It belongs to the tubulin family. In terms of assembly, dimer of alpha and beta chains. A typical microtubule is a hollow water-filled tube with an outer diameter of 25 nm and an inner diameter of 15 nM. Alpha-beta heterodimers associate head-to-tail to form protofilaments running lengthwise along the microtubule wall with the beta-tubulin subunit facing the microtubule plus end conferring a structural polarity. Microtubules usually have 13 protofilaments but different protofilament numbers can be found in some organisms and specialized cells. Requires Mg(2+) as cofactor.

Its subcellular location is the cytoplasm. The protein resides in the cytoskeleton. In terms of biological role, tubulin is the major constituent of microtubules, a cylinder consisting of laterally associated linear protofilaments composed of alpha- and beta-tubulin heterodimers. Microtubules grow by the addition of GTP-tubulin dimers to the microtubule end, where a stabilizing cap forms. Below the cap, tubulin dimers are in GDP-bound state, owing to GTPase activity of alpha-tubulin. The polypeptide is Tubulin beta chain (nda3) (Schizosaccharomyces pombe (strain 972 / ATCC 24843) (Fission yeast)).